The primary structure comprises 326 residues: Thiazole synthase (326 aa).

Residue K168 is the Schiff-base intermediate with DXP of the active site. Residues G229, 255 to 256 (AG), and 277 to 278 (NT) contribute to the 1-deoxy-D-xylulose 5-phosphate site.

The protein belongs to the ThiG family. In terms of assembly, homotetramer. Forms heterodimers with either ThiH or ThiS.

The protein resides in the cytoplasm. The catalysed reaction is [ThiS sulfur-carrier protein]-C-terminal-Gly-aminoethanethioate + 2-iminoacetate + 1-deoxy-D-xylulose 5-phosphate = [ThiS sulfur-carrier protein]-C-terminal Gly-Gly + 2-[(2R,5Z)-2-carboxy-4-methylthiazol-5(2H)-ylidene]ethyl phosphate + 2 H2O + H(+). It functions in the pathway cofactor biosynthesis; thiamine diphosphate biosynthesis. Functionally, catalyzes the rearrangement of 1-deoxy-D-xylulose 5-phosphate (DXP) to produce the thiazole phosphate moiety of thiamine. Sulfur is provided by the thiocarboxylate moiety of the carrier protein ThiS. In vitro, sulfur can be provided by H(2)S. This is Thiazole synthase from Magnetococcus marinus (strain ATCC BAA-1437 / JCM 17883 / MC-1).